The sequence spans 98 residues: DNA-binding protein HU (98 aa).

This sequence belongs to the bacterial histone-like protein family. As to quaternary structure, homodimer.

Functionally, histone-like DNA-binding protein which is capable of wrapping DNA to stabilize it, and thus to prevent its denaturation under extreme environmental conditions. The chain is DNA-binding protein HU (hup) from Campylobacter jejuni subsp. jejuni serotype O:2 (strain ATCC 700819 / NCTC 11168).